A 46-amino-acid polypeptide reads, in one-letter code: uncharacterized protein (46 aa).

It localises to the plastid. The protein resides in the chloroplast. This is an uncharacterized protein from Trieres chinensis (Marine centric diatom).